The sequence spans 222 residues: Capsular polysaccharide type 8 biosynthesis protein cap8A (222 aa).

2 helical membrane-spanning segments follow: residues 20 to 40 (ILII…FFVL) and 172 to 192 (VVNL…YIFF).

Belongs to the CpsC/CapA family.

Its subcellular location is the cell membrane. In terms of biological role, required for the biosynthesis of type 8 capsular polysaccharide (Cap8/CP8). Might act as the chain-length regulator. The polypeptide is Capsular polysaccharide type 8 biosynthesis protein cap8A (cap8A) (Staphylococcus aureus).